The primary structure comprises 289 residues: Serine/threonine-protein phosphatase Pgam5, mitochondrial (289 aa).

The helical transmembrane segment at 7-23 (FACGTGAGLLTFYLTKL) threads the bilayer.

The protein belongs to the phosphoglycerate mutase family. BPG-dependent PGAM subfamily. In terms of assembly, interacts with Pk92B/ASK1.

Its subcellular location is the mitochondrion outer membrane. The catalysed reaction is O-phospho-L-seryl-[protein] + H2O = L-seryl-[protein] + phosphate. It carries out the reaction O-phospho-L-threonyl-[protein] + H2O = L-threonyl-[protein] + phosphate. Functionally, displays phosphatase activity for serine/threonine residues, and dephosphorylates and activates Pk92B kinase. Has apparently no phosphoglycerate mutase activity. The sequence is that of Serine/threonine-protein phosphatase Pgam5, mitochondrial from Drosophila persimilis (Fruit fly).